We begin with the raw amino-acid sequence, 137 residues long: Fibroblast growth factor 2 (137 aa).

Asn-27 contacts heparin. Tyr-73 carries the post-translational modification Phosphotyrosine; by TEC. Residue Lys-86 forms a Glycyl lysine isopeptide (Lys-Gly) (interchain with G-Cter in SUMO1) linkage. A heparin-binding region spans residues 119–135 (KRTGQYKLGSKTGPGQK).

This sequence belongs to the heparin-binding growth factors family. In terms of assembly, monomer. Homodimer. Interacts with FGFR1, FGFR2, FGFR3 and FGFR4. Affinity between fibroblast growth factors (FGFs) and their receptors is increased by heparan sulfate glycosaminoglycans that function as coreceptors. Interacts with CSPG4, FGFBP1 and TEC. Found in a complex with FGFBP1, FGF1 and FGF2. Interacts with FGFBP3. Interacts with integrin ITGAV:ITGB3; the interaction is required for FGF2 signaling. Interacts with SNORC (via the extracellular domain). Interacts with glypican GPC3. Phosphorylation at Tyr-73 regulates FGF2 unconventional secretion.

The protein localises to the secreted. It localises to the nucleus. Its function is as follows. Acts as a ligand for FGFR1, FGFR2, FGFR3 and FGFR4. Also acts as an integrin ligand which is required for FGF2 signaling. Binds to integrin ITGAV:ITGB3. Plays an important role in the regulation of cell survival, cell division, cell differentiation and cell migration. Functions as a potent mitogen in vitro. Can induce angiogenesis. Mediates phosphorylation of ERK1/2 and thereby promotes retinal lens fiber differentiation. This Oryctolagus cuniculus (Rabbit) protein is Fibroblast growth factor 2 (FGF2).